We begin with the raw amino-acid sequence, 265 residues long: Type 1 encapsulin shell protein (265 aa).

The protein belongs to the encapsulin family. Family 1 subfamily. In terms of assembly, found in a complex with DyP, suggesting it is the native cargo protein. Monomers form pentamers, which assemble to form hollow shells composed of 60 subunits with several openings.

It localises to the encapsulin nanocompartment. The protein localises to the cell membrane. Shell component of a type 1 encapsulin nanocompartment. Assembles into proteinaceous shells 23-24 nm in diameter with 2-2.5 nm thick walls. Cargo protein DyP is targeted to the interior via its C-terminal extension; probably only 1 DyP hexamer is incorporated into each shell. Probably involved in protection against oxidative damage. The polypeptide is Type 1 encapsulin shell protein (Mycolicibacterium paratuberculosis (strain ATCC BAA-968 / K-10) (Mycobacterium paratuberculosis)).